The following is a 443-amino-acid chain: 23S rRNA (uracil(1939)-C(5))-methyltransferase RlmD (443 aa).

Residues 12-70 form the TRAM domain; the sequence is AKKLSQKIALKVQRLDHLGAGIAEHQGKVVFIPGALPGETVEVQLTEQKKNYARAKLQR. Residues Cys83, Cys89, Cys92, and Cys171 each coordinate [4Fe-4S] cluster. Positions 276, 305, 310, 326, 353, and 373 each coordinate S-adenosyl-L-methionine. The active-site Nucleophile is the Cys399.

It belongs to the class I-like SAM-binding methyltransferase superfamily. RNA M5U methyltransferase family. RlmD subfamily.

The catalysed reaction is uridine(1939) in 23S rRNA + S-adenosyl-L-methionine = 5-methyluridine(1939) in 23S rRNA + S-adenosyl-L-homocysteine + H(+). In terms of biological role, catalyzes the formation of 5-methyl-uridine at position 1939 (m5U1939) in 23S rRNA. The chain is 23S rRNA (uracil(1939)-C(5))-methyltransferase RlmD from Shewanella amazonensis (strain ATCC BAA-1098 / SB2B).